The primary structure comprises 83 residues: RNA-binding protein Hfq (83 aa).

The 61-residue stretch at 9–69 folds into the Sm domain; sequence DQLLNTARKE…ISTIIPAKPI (61 aa).

The protein belongs to the Hfq family. In terms of assembly, homohexamer.

Its function is as follows. RNA chaperone that binds small regulatory RNA (sRNAs) and mRNAs to facilitate mRNA translational regulation in response to envelope stress, environmental stress and changes in metabolite concentrations. Also binds with high specificity to tRNAs. The protein is RNA-binding protein Hfq of Leptospira biflexa serovar Patoc (strain Patoc 1 / Ames).